A 484-amino-acid chain; its full sequence is uncharacterized protein (484 aa).

To M.thermoautotrophicum MTH1153.

This is an uncharacterized protein from Methanocaldococcus jannaschii (strain ATCC 43067 / DSM 2661 / JAL-1 / JCM 10045 / NBRC 100440) (Methanococcus jannaschii).